The sequence spans 635 residues: Threonine--tRNA ligase (635 aa).

The TGS domain occupies 1–61; that stretch reads MIQITLPDAS…EKDSALSIIT (61 aa). The segment at 242–533 is catalytic; the sequence is DHRKLGKELD…LIEEHAGALP (292 aa). Zn(2+) contacts are provided by Cys-333, His-384, and His-510.

The protein belongs to the class-II aminoacyl-tRNA synthetase family. In terms of assembly, homodimer. Zn(2+) serves as cofactor.

It localises to the cytoplasm. The enzyme catalyses tRNA(Thr) + L-threonine + ATP = L-threonyl-tRNA(Thr) + AMP + diphosphate + H(+). Catalyzes the attachment of threonine to tRNA(Thr) in a two-step reaction: L-threonine is first activated by ATP to form Thr-AMP and then transferred to the acceptor end of tRNA(Thr). Also edits incorrectly charged L-seryl-tRNA(Thr). The polypeptide is Threonine--tRNA ligase (Polaromonas sp. (strain JS666 / ATCC BAA-500)).